A 321-amino-acid polypeptide reads, in one-letter code: Cathepsin O (321 aa).

A signal peptide spans 1 to 23 (MDVRALPWLPWLLWLLCRGGGDA). The propeptide at 24–107 (DSRAPFTPTW…EVHMSIPNVS (84 aa)) is activation peptide. 2 N-linked (GlcNAc...) asparagine glycosylation sites follow: Asn-62 and Asn-105. 3 cysteine pairs are disulfide-bonded: Cys-129–Cys-170, Cys-163–Cys-204, and Cys-262–Cys-310. Residue Cys-132 is part of the active site. Residues His-269 and Asn-289 contribute to the active site.

The protein belongs to the peptidase C1 family. In terms of tissue distribution, expressed in all tissues examined. High levels seen in the ovary, kidney and placenta while low levels seen in thymus and skeletal muscle.

It localises to the lysosome. It catalyses the reaction The recombinant human enzyme hydrolyzes synthetic endopeptidase substrates including Z-Phe-Arg-NHMec and Z-Arg-Arg-NHMec.. Functionally, proteolytic enzyme possibly involved in normal cellular protein degradation and turnover. The polypeptide is Cathepsin O (CTSO) (Homo sapiens (Human)).